The sequence spans 419 residues: Phospho-N-acetylmuramoyl-pentapeptide-transferase (419 aa).

10 consecutive transmembrane segments (helical) span residues 22-42, 72-92, 99-119, 135-155, 208-228, 238-258, 278-298, 303-323, 328-348, and 396-416; these read YVSFRSAVAIVLALLLATVIG, TPTMGGLIIIISILIPTLLLA, ILLMIVTTVLLGSLGFLDDYI, IIGQVGLGFIIGIVLYMNPAV, VLFGWILFVCVAVVVVTFISN, GLATGSSAIIGVVLAIFAYVS, LTIFAFAFVGATIGFLWYNAY, FMGDTGSLTLGGIIAVFALII, LLPILCFVFIIEGLSVMIQVF, and KITVRFWLVGIIMAAITIATL.

The protein belongs to the glycosyltransferase 4 family. MraY subfamily. Mg(2+) is required as a cofactor.

It is found in the cell inner membrane. It catalyses the reaction UDP-N-acetyl-alpha-D-muramoyl-L-alanyl-gamma-D-glutamyl-meso-2,6-diaminopimeloyl-D-alanyl-D-alanine + di-trans,octa-cis-undecaprenyl phosphate = di-trans,octa-cis-undecaprenyl diphospho-N-acetyl-alpha-D-muramoyl-L-alanyl-D-glutamyl-meso-2,6-diaminopimeloyl-D-alanyl-D-alanine + UMP. It functions in the pathway cell wall biogenesis; peptidoglycan biosynthesis. Functionally, catalyzes the initial step of the lipid cycle reactions in the biosynthesis of the cell wall peptidoglycan: transfers peptidoglycan precursor phospho-MurNAc-pentapeptide from UDP-MurNAc-pentapeptide onto the lipid carrier undecaprenyl phosphate, yielding undecaprenyl-pyrophosphoryl-MurNAc-pentapeptide, known as lipid I. In Porphyromonas gingivalis (strain ATCC BAA-308 / W83), this protein is Phospho-N-acetylmuramoyl-pentapeptide-transferase.